The chain runs to 199 residues: GTP-binding protein Di-Ras2 (199 aa).

GTP-binding positions include 14-21 (GAGGVGKS), 33-39 (RESYIPT), 61-65 (DTTGS), and 121-124 (NKCD). Ser-35 is subject to Phosphoserine. The Effector region signature appears at 36–44 (YIPTVEDTY). Ser-126 carries the post-translational modification Phosphoserine. 152-153 (AK) is a GTP binding site. Cys-196 bears the Cysteine methyl ester mark. The S-geranylgeranyl cysteine moiety is linked to residue Cys-196. Residues 197 to 199 (VIM) constitute a propeptide, removed in mature form.

Belongs to the small GTPase superfamily. Di-Ras family. In terms of processing, ubiquitinated by the ECS(ASB11) complex via 'Lys-11'-linked ubiquitin chains, leading to its degradation by the proteasome.

Its subcellular location is the cell membrane. The catalysed reaction is GTP + H2O = GDP + phosphate + H(+). Its function is as follows. Displays low GTPase activity and exists predominantly in the GTP-bound form. The protein is GTP-binding protein Di-Ras2 (DIRAS2) of Pongo abelii (Sumatran orangutan).